Here is a 221-residue protein sequence, read N- to C-terminus: MTIEVLDRGFVKLLDHMGDDFSAVKAARISHGRDLIDEERDRKLIEYLLRSGHESPFEHIVFTFHIKCPIFVARQWMRHRIASYNELSGRYTELAEEFYLPDLYKRYGERLNENDLQKASKLIEESYKKSHEAYKCLIDMKIPKELARVVLPFATYTQFIWSVNARSLMNFLSLRADSHSQWEMQQFALAVAQVFKSICPWTYESFIRYRYEGDLLKGVNP.

In terms of domain architecture, ThyX spans 9–209 (GFVKLLDHMG…PWTYESFIRY (201 aa)). FAD-binding positions include Ser-55, 78 to 80 (RHR), and Glu-86. Residues 75-78 (QWMR), 86-90 (ELSGR), and Arg-148 contribute to the dUMP site. A ThyX motif motif is present at residues 78 to 88 (RHRIASYNELS). FAD contacts are provided by residues 164 to 166 (NAR) and Asn-170. DUMP is bound at residue Arg-175. The active-site Involved in ionization of N3 of dUMP, leading to its activation is Arg-175.

Belongs to the thymidylate synthase ThyX family. As to quaternary structure, homotetramer. It depends on FAD as a cofactor.

The catalysed reaction is dUMP + (6R)-5,10-methylene-5,6,7,8-tetrahydrofolate + NADPH + H(+) = dTMP + (6S)-5,6,7,8-tetrahydrofolate + NADP(+). It participates in pyrimidine metabolism; dTTP biosynthesis. Catalyzes the reductive methylation of 2'-deoxyuridine-5'-monophosphate (dUMP) to 2'-deoxythymidine-5'-monophosphate (dTMP) while utilizing 5,10-methylenetetrahydrofolate (mTHF) as the methyl donor, and NADPH and FADH(2) as the reductant. This chain is Flavin-dependent thymidylate synthase, found in Pseudothermotoga lettingae (strain ATCC BAA-301 / DSM 14385 / NBRC 107922 / TMO) (Thermotoga lettingae).